The primary structure comprises 259 residues: E3 ubiquitin-protein ligase RNF170 (259 aa).

The Lumenal segment spans residues 1-25 (MAKYQGEVQSLKLDDDSVIEGVSDQ). Residues 26–46 (VLVAVVVSLALIATLVYALFS) traverse the membrane as a helical segment. The Cytoplasmic segment spans residues 47 to 202 (RNAHQNIHPE…GGLFWMFRIR (156 aa)). The segment at 88 to 131 (CPICLHQASLPVETNCGHLFCGTCIVAYWRYGSWLGAISCPICR) adopts an RING-type zinc-finger fold. The helical transmembrane segment at 203–223 (IILCLMGAFFYLISPLDFVPE) threads the bilayer. Position 224 (A224) is a topological domain, lumenal. Residues 225 to 245 (LFGILGFLDDFFVIFLLLIYI) form a helical membrane-spanning segment. Over 246 to 259 (SIMYREVITQRLNR) the chain is Cytoplasmic.

As to quaternary structure, constitutively associated with the ERLIN1/ERLIN 2 complex. Interacts with activated ITPR1.

It is found in the endoplasmic reticulum membrane. The enzyme catalyses S-ubiquitinyl-[E2 ubiquitin-conjugating enzyme]-L-cysteine + [acceptor protein]-L-lysine = [E2 ubiquitin-conjugating enzyme]-L-cysteine + N(6)-ubiquitinyl-[acceptor protein]-L-lysine.. The protein operates within protein modification; protein ubiquitination. Functionally, E3 ubiquitin-protein ligase. Plays an essential role in stimulus-induced inositol 1,4,5-trisphosphate receptor type 1 (ITPR1) ubiquitination and degradation via the endoplasmic reticulum-associated degradation (ERAD) pathway. Also involved in ITPR1 turnover in resting cells. Selectively inhibits the TLR3-triggered innate immune response by promoting the 'Lys-48'-linked polyubiquitination and degradation of TLR3. In Bos taurus (Bovine), this protein is E3 ubiquitin-protein ligase RNF170 (RNF170).